We begin with the raw amino-acid sequence, 198 residues long: Recombination protein RecR (198 aa).

Residues Cys56 to Cys71 form a C4-type zinc finger. The Toprim domain maps to Gly79–Pro174.

Belongs to the RecR family.

May play a role in DNA repair. It seems to be involved in an RecBC-independent recombinational process of DNA repair. It may act with RecF and RecO. In Tropheryma whipplei (strain Twist) (Whipple's bacillus), this protein is Recombination protein RecR.